A 576-amino-acid polypeptide reads, in one-letter code: Capsid protein (576 aa).

The segment at 489-576 is disordered; sequence GYREPKPKPG…GLLALLKEKK (88 aa). The span at 496–509 shows a compositional bias: pro residues; sequence KPGPPETLIPPGAP. Residues 520–537 show a composition bias toward acidic residues; sequence TESDDFDTGDSEEEEEDH. The span at 538 to 551 shows a compositional bias: basic and acidic residues; sequence QDPRWVRESLDKLT. A compositionally biased stretch (low complexity) spans 562 to 576; sequence QQLGKGLLALLKEKK.

It belongs to the anelloviridae capsid protein family.

It is found in the virion. Functionally, self-assembles to form an icosahedral capsid with a T=1 symmetry, about 30 nm in diameter, and consisting of 60 capsid proteins. The capsid encapsulates the genomic DNA. Capsid protein is involved in attachment and entry into the host cell. The chain is Capsid protein from Torque teno canis virus (isolate Cf-TTV10).